We begin with the raw amino-acid sequence, 162 residues long: Disulfide bond formation protein B (162 aa).

Residues 1 to 8 are Cytoplasmic-facing; sequence MTPLFRKA. Residues 9 to 25 traverse the membrane as a helical segment; the sequence is VWLLFAVSVCAFAGSLA. The Periplasmic portion of the chain corresponds to 26–43; that stretch reads AQYVLGMEPCVLCISQRL. A disulfide bridge links Cys-35 with Cys-38. Residues 44 to 60 form a helical membrane-spanning segment; sequence CVLATALCAAVVLACKP. Residues 61–67 lie on the Cytoplasmic side of the membrane; the sequence is KGRVGGL. A helical transmembrane segment spans residues 68 to 85; it reads SGAVFISIPAVTGISVAA. The Periplasmic segment spans residues 86 to 141; it reads YQLWLQSLPPGAAPSCGAPWTFRLKGWPLFDWFEPVVRGFGNCAEPDYLLGVALPV. Cys-101 and Cys-128 are oxidised to a cystine. A helical membrane pass occupies residues 142–160; the sequence is WSAAYFLAVVLTVWWAWAR. Residues 161–162 are Cytoplasmic-facing; it reads AK.

This sequence belongs to the DsbB family.

It localises to the cell inner membrane. Required for disulfide bond formation in some periplasmic proteins. Acts by oxidizing the DsbA protein. This Neisseria gonorrhoeae (strain ATCC 700825 / FA 1090) protein is Disulfide bond formation protein B.